The following is a 302-amino-acid chain: Small ribosomal subunit protein uS2 (302 aa).

The interval 275–302 is disordered; the sequence is EGEGESEAEPVVAKKKPVRAKRPAVKAE. Basic residues predominate over residues 287-302; the sequence is AKKKPVRAKRPAVKAE.

Belongs to the universal ribosomal protein uS2 family.

The protein is Small ribosomal subunit protein uS2 of Opitutus terrae (strain DSM 11246 / JCM 15787 / PB90-1).